A 498-amino-acid polypeptide reads, in one-letter code: Glycerol kinase (498 aa).

Thr12 provides a ligand contact to ADP. ATP is bound by residues Thr12, Thr13, and Ser14. Residue Thr12 participates in sn-glycerol 3-phosphate binding. Residue Arg16 coordinates ADP. Sn-glycerol 3-phosphate is bound by residues Arg82, Glu83, Tyr134, and Asp243. The glycerol site is built by Arg82, Glu83, Tyr134, Asp243, and Gln244. ADP contacts are provided by Thr265 and Gly308. ATP contacts are provided by Thr265, Gly308, Gln312, and Gly409. ADP-binding residues include Gly409 and Asn413.

This sequence belongs to the FGGY kinase family. As to quaternary structure, homotetramer and homodimer (in equilibrium).

It catalyses the reaction glycerol + ATP = sn-glycerol 3-phosphate + ADP + H(+). It participates in polyol metabolism; glycerol degradation via glycerol kinase pathway; sn-glycerol 3-phosphate from glycerol: step 1/1. With respect to regulation, activated by phosphorylation and inhibited by fructose 1,6-bisphosphate (FBP). Functionally, key enzyme in the regulation of glycerol uptake and metabolism. Catalyzes the phosphorylation of glycerol to yield sn-glycerol 3-phosphate. This chain is Glycerol kinase, found in Clostridium botulinum (strain Okra / Type B1).